Reading from the N-terminus, the 439-residue chain is uncharacterized protein (439 aa).

Disordered regions lie at residues 1–36 (MRPGNAATAHDTGTQPRPGPTENWRSPAAVTRSKQA), 126–157 (SRTGAAVSDEYRPTGAALEQPGQEPGGTGVPI), and 411–439 (FRSDVPQPPPSPACRTTRAGSGAVAAVPR).

This is an uncharacterized protein from Streptomyces fradiae (Streptomyces roseoflavus).